The sequence spans 283 residues: Protein/nucleic acid deglycase HchA (283 aa).

Residues His86, Glu91, and His123 each contribute to the Zn(2+) site. The active-site Nucleophile is Cys185.

The protein belongs to the peptidase C56 family. HchA subfamily. Homodimer.

It localises to the cytoplasm. It carries out the reaction N(omega)-(1-hydroxy-2-oxopropyl)-L-arginyl-[protein] + H2O = lactate + L-arginyl-[protein] + H(+). The catalysed reaction is N(6)-(1-hydroxy-2-oxopropyl)-L-lysyl-[protein] + H2O = lactate + L-lysyl-[protein] + H(+). The enzyme catalyses S-(1-hydroxy-2-oxopropyl)-L-cysteinyl-[protein] + H2O = lactate + L-cysteinyl-[protein] + H(+). It catalyses the reaction N(omega)-(1-hydroxy-2-oxoethyl)-L-arginyl-[protein] + H2O = L-arginyl-[protein] + glycolate + H(+). It carries out the reaction N(6)-(1-hydroxy-2-oxoethyl)-L-lysyl-[protein] + H2O = glycolate + L-lysyl-[protein] + H(+). The catalysed reaction is S-(1-hydroxy-2-oxoethyl)-L-cysteinyl-[protein] + H2O = glycolate + L-cysteinyl-[protein] + H(+). The enzyme catalyses N(2)-(1-hydroxy-2-oxopropyl)-dGTP + H2O = lactate + dGTP + H(+). It catalyses the reaction N(2)-(1-hydroxy-2-oxopropyl)-GTP + H2O = lactate + GTP + H(+). It carries out the reaction N(2)-(1-hydroxy-2-oxopropyl)-GDP + H2O = lactate + GDP + H(+). The catalysed reaction is N(2)-(1-hydroxy-2-oxopropyl)-GMP + H2O = lactate + GMP + H(+). The enzyme catalyses N(2)-(1-hydroxy-2-oxoethyl)-dGTP + H2O = dGTP + glycolate + H(+). It catalyses the reaction N(2)-(1-hydroxy-2-oxoethyl)-GTP + H2O = glycolate + GTP + H(+). It carries out the reaction N(2)-(1-hydroxy-2-oxoethyl)-GDP + H2O = glycolate + GDP + H(+). The catalysed reaction is N(2)-(1-hydroxy-2-oxoethyl)-GMP + H2O = glycolate + GMP + H(+). The enzyme catalyses an N(2)-(1-hydroxy-2-oxopropyl)-guanosine in RNA + H2O = a guanosine in RNA + lactate + H(+). It catalyses the reaction an N(2)-(1-hydroxy-2-oxopropyl)-2'-deoxyguanosine in DNA + H2O = a 2'-deoxyguanosine in DNA + lactate + H(+). It carries out the reaction an N(2)-(1-hydroxy-2-oxoethyl)-guanosine in RNA + H2O = a guanosine in RNA + glycolate + H(+). The catalysed reaction is an N(2)-(1-hydroxy-2-oxoethyl)-2'-deoxyguanosine in DNA + H2O = a 2'-deoxyguanosine in DNA + glycolate + H(+). In terms of biological role, protein and nucleotide deglycase that catalyzes the deglycation of the Maillard adducts formed between amino groups of proteins or nucleotides and reactive carbonyl groups of glyoxals. Thus, functions as a protein deglycase that repairs methylglyoxal- and glyoxal-glycated proteins, and releases repaired proteins and lactate or glycolate, respectively. Deglycates cysteine, arginine and lysine residues in proteins, and thus reactivates these proteins by reversing glycation by glyoxals. Acts on early glycation intermediates (hemithioacetals and aminocarbinols), preventing the formation of Schiff bases and advanced glycation endproducts (AGE). Also functions as a nucleotide deglycase able to repair glycated guanine in the free nucleotide pool (GTP, GDP, GMP, dGTP) and in DNA and RNA. Is thus involved in a major nucleotide repair system named guanine glycation repair (GG repair), dedicated to reversing methylglyoxal and glyoxal damage via nucleotide sanitization and direct nucleic acid repair. Plays an important role in protecting cells from carbonyl stress. The protein is Protein/nucleic acid deglycase HchA of Shigella flexneri.